Here is a 46-residue protein sequence, read N- to C-terminus: U-limacoditoxin(6)-Dv61 (46 aa).

The N-terminal stretch at Met1–Ala19 is a signal peptide.

This sequence belongs to the limacoditoxin-6 family. As to expression, expressed by the venom secretory cell of the spine. The spine is a cuticular structure containing a single large nucleated venom-secreting cell at its base. It is an independent unit capable of producing, storing and injecting venom. On the back of D.vulnerans caterpillars, spines are grouped together by 50 to 100 to form scoli, of which there are eight in D.vulnerans.

The protein localises to the secreted. In terms of biological role, probable toxin. Does not show insecticidal, antimicrobial and antiparasitic activities. Does not induce increase in intracellular calcium in mouse DRG neurons, suggesting that it does not induce pain. This Doratifera vulnerans (Mottled cup moth) protein is U-limacoditoxin(6)-Dv61.